Consider the following 155-residue polypeptide: RNA pyrophosphohydrolase (155 aa).

A Nudix hydrolase domain is found at 5-147 (KYRPNVAAII…KRQVYRQVIA (143 aa)). A Nudix box motif is present at residues 42–63 (GGIDEGETPLEALHRELLEEIG).

It belongs to the Nudix hydrolase family. RppH subfamily. The cofactor is a divalent metal cation.

In terms of biological role, accelerates the degradation of transcripts by removing pyrophosphate from the 5'-end of triphosphorylated RNA, leading to a more labile monophosphorylated state that can stimulate subsequent ribonuclease cleavage. This Helicobacter pylori (strain G27) protein is RNA pyrophosphohydrolase.